The following is a 449-amino-acid chain: Tubulin alpha chain (449 aa).

GTP contacts are provided by Gln11, Glu71, Ser140, Gly144, Thr145, Thr179, Asn206, and Asn228. Mg(2+) is bound at residue Glu71. The active site involves Glu254.

This sequence belongs to the tubulin family. As to quaternary structure, dimer of alpha and beta chains. A typical microtubule is a hollow water-filled tube with an outer diameter of 25 nm and an inner diameter of 15 nM. Alpha-beta heterodimers associate head-to-tail to form protofilaments running lengthwise along the microtubule wall with the beta-tubulin subunit facing the microtubule plus end conferring a structural polarity. Microtubules usually have 13 protofilaments but different protofilament numbers can be found in some organisms and specialized cells. Mg(2+) serves as cofactor.

The protein resides in the cytoplasm. Its subcellular location is the cytoskeleton. The catalysed reaction is GTP + H2O = GDP + phosphate + H(+). Functionally, tubulin is the major constituent of microtubules, a cylinder consisting of laterally associated linear protofilaments composed of alpha- and beta-tubulin heterodimers. Microtubules grow by the addition of GTP-tubulin dimers to the microtubule end, where a stabilizing cap forms. Below the cap, tubulin dimers are in GDP-bound state, owing to GTPase activity of alpha-tubulin. The sequence is that of Tubulin alpha chain (TUBA) from Sordaria macrospora (strain ATCC MYA-333 / DSM 997 / K(L3346) / K-hell).